Reading from the N-terminus, the 562-residue chain is Dihydroxy-acid dehydratase (562 aa).

Residue Asp-80 participates in Mg(2+) binding. Cys-121 provides a ligand contact to [2Fe-2S] cluster. The Mg(2+) site is built by Asp-122 and Lys-123. Lys-123 carries the N6-carboxylysine modification. Cys-194 is a [2Fe-2S] cluster binding site. Glu-446 lines the Mg(2+) pocket. Ser-472 functions as the Proton acceptor in the catalytic mechanism.

This sequence belongs to the IlvD/Edd family. Homodimer. The cofactor is [2Fe-2S] cluster. Requires Mg(2+) as cofactor.

It carries out the reaction (2R)-2,3-dihydroxy-3-methylbutanoate = 3-methyl-2-oxobutanoate + H2O. The catalysed reaction is (2R,3R)-2,3-dihydroxy-3-methylpentanoate = (S)-3-methyl-2-oxopentanoate + H2O. It functions in the pathway amino-acid biosynthesis; L-isoleucine biosynthesis; L-isoleucine from 2-oxobutanoate: step 3/4. Its pathway is amino-acid biosynthesis; L-valine biosynthesis; L-valine from pyruvate: step 3/4. Functions in the biosynthesis of branched-chain amino acids. Catalyzes the dehydration of (2R,3R)-2,3-dihydroxy-3-methylpentanoate (2,3-dihydroxy-3-methylvalerate) into 2-oxo-3-methylpentanoate (2-oxo-3-methylvalerate) and of (2R)-2,3-dihydroxy-3-methylbutanoate (2,3-dihydroxyisovalerate) into 2-oxo-3-methylbutanoate (2-oxoisovalerate), the penultimate precursor to L-isoleucine and L-valine, respectively. The sequence is that of Dihydroxy-acid dehydratase from Staphylococcus haemolyticus (strain JCSC1435).